We begin with the raw amino-acid sequence, 259 residues long: Thiazole synthase (259 aa).

K100 serves as the catalytic Schiff-base intermediate with DXP. Residues G161, 187 to 188, and 209 to 210 contribute to the 1-deoxy-D-xylulose 5-phosphate site; these read AG and NT.

It belongs to the ThiG family. As to quaternary structure, homotetramer. Forms heterodimers with either ThiH or ThiS.

The protein localises to the cytoplasm. The catalysed reaction is [ThiS sulfur-carrier protein]-C-terminal-Gly-aminoethanethioate + 2-iminoacetate + 1-deoxy-D-xylulose 5-phosphate = [ThiS sulfur-carrier protein]-C-terminal Gly-Gly + 2-[(2R,5Z)-2-carboxy-4-methylthiazol-5(2H)-ylidene]ethyl phosphate + 2 H2O + H(+). The protein operates within cofactor biosynthesis; thiamine diphosphate biosynthesis. Functionally, catalyzes the rearrangement of 1-deoxy-D-xylulose 5-phosphate (DXP) to produce the thiazole phosphate moiety of thiamine. Sulfur is provided by the thiocarboxylate moiety of the carrier protein ThiS. In vitro, sulfur can be provided by H(2)S. This chain is Thiazole synthase, found in Methylobacillus flagellatus (strain ATCC 51484 / DSM 6875 / VKM B-1610 / KT).